Reading from the N-terminus, the 545-residue chain is CTP synthase (545 aa).

The interval 1-266 (MATNYIFVTG…DSFVCDRFRL (266 aa)) is amidoligase domain. A CTP-binding site is contributed by serine 14. Serine 14 is a UTP binding site. ATP is bound by residues 15-20 (SLGKGI) and aspartate 72. Mg(2+) contacts are provided by aspartate 72 and glutamate 140. Residues 147-149 (DIE), 187-192 (KTKPTQ), and lysine 223 each bind CTP. UTP is bound by residues 187–192 (KTKPTQ) and lysine 223. Residue 239–241 (KDV) coordinates ATP. One can recognise a Glutamine amidotransferase type-1 domain in the interval 291-542 (TIGMVGKYVE…VAAAKAYQDS (252 aa)). Position 352 (glycine 352) interacts with L-glutamine. Cysteine 379 (nucleophile; for glutamine hydrolysis) is an active-site residue. L-glutamine contacts are provided by residues 380 to 383 (LGMQ), glutamate 403, and arginine 470. Residues histidine 515 and glutamate 517 contribute to the active site.

This sequence belongs to the CTP synthase family. As to quaternary structure, homotetramer.

It catalyses the reaction UTP + L-glutamine + ATP + H2O = CTP + L-glutamate + ADP + phosphate + 2 H(+). It carries out the reaction L-glutamine + H2O = L-glutamate + NH4(+). The catalysed reaction is UTP + NH4(+) + ATP = CTP + ADP + phosphate + 2 H(+). It participates in pyrimidine metabolism; CTP biosynthesis via de novo pathway; CTP from UDP: step 2/2. With respect to regulation, allosterically activated by GTP, when glutamine is the substrate; GTP has no effect on the reaction when ammonia is the substrate. The allosteric effector GTP functions by stabilizing the protein conformation that binds the tetrahedral intermediate(s) formed during glutamine hydrolysis. Inhibited by the product CTP, via allosteric rather than competitive inhibition. Functionally, catalyzes the ATP-dependent amination of UTP to CTP with either L-glutamine or ammonia as the source of nitrogen. Regulates intracellular CTP levels through interactions with the four ribonucleotide triphosphates. This chain is CTP synthase, found in Haemophilus ducreyi (strain 35000HP / ATCC 700724).